A 307-amino-acid chain; its full sequence is MNKGVMRPGHVQLRVLDMSKALEHYVELLGLIEMDRDDQGRVYLKAWTEVDKFSLVLREADEPGMDFMGFKVVDEDALRQLERDLMAYGCAVEQLPAGELNSCGRRVRFQAPSGHHFELYADKEYTGKWGLNDVNPEAWPRDLKGMAAVRFDHALMYGDELPATYDLFTKVLGFYLAEQVLDENGTRVAQFLSLSTKAHDVAFIHHPEKGRLHHVSFHLETWEDLLRAADLISMTDTSIDIGPTRHGLTHGKTIYFFDPSGNRNEVFCGGDYNYPDHKPVTWTTDQLGKAIFYHDRILNERFMTVLT.

VOC domains are found at residues 7-122 and 150-269; these read RPGH…LYAD and RFDH…VFCG. Residues H153, H214, and E265 each contribute to the Fe cation site.

It belongs to the extradiol ring-cleavage dioxygenase family. In terms of assembly, homotetramer. The cofactor is Fe(2+).

It catalyses the reaction catechol + O2 = (2Z,4E)-2-hydroxy-6-oxohexa-2,4-dienoate + H(+). It participates in xenobiotic degradation; toluene degradation. The protein is Metapyrocatechase (xylE) of Pseudomonas putida (Arthrobacter siderocapsulatus).